We begin with the raw amino-acid sequence, 190 residues long: MFGMIKNSLFGGVENNEGKLVSKGEKDGVAFEEREYEGGKFVSTEVSGKPFDEASKEAVLRLLKYVGGSNQKYAGMGMTSPVVITSYPAENETLQPNVKVLLRIPSQYQADPPVPTDDTIHIEDRESVTFYSTQFGGYAKEADYVSHAAKLRSCLGPDISYHTDHYMCCGYDPPMKPYGRRNEVWFIKNN.

This sequence belongs to the HEBP family. As to quaternary structure, monomer.

It localises to the cytoplasm. May bind free porphyrinogens that may be present in the cell and thus facilitate removal of these potentially toxic compound. Binds with a high affinity to one molecule of heme or porphyrins. It binds metalloporphyrins, free porphyrins and N-methylprotoporphyrin with similar affinities. The polypeptide is Heme-binding protein 1 (hebp1) (Xenopus tropicalis (Western clawed frog)).